We begin with the raw amino-acid sequence, 957 residues long: SH3 domain-binding protein 4 (957 aa).

The region spanning 54–113 (DNVKEVVAIKDYCPNNFTTLKFSKGEHLYVLDTSGGEWWYAHNTTEMGYIPSSYVQPLNY) is the SH3 1 domain. Residues 312-449 (TSIVCRLDSS…LEPVMYVVMV (138 aa)) form the ZU5 domain. In terms of domain architecture, SH3 2 spans 649–719 (TSLKYGKLLK…HAKNVLVVGK (71 aa)).

In terms of assembly, homodimer or homooligomer.

It localises to the membrane. It is found in the clathrin-coated pit. Its subcellular location is the cytoplasmic vesicle. The protein localises to the clathrin-coated vesicle. The protein resides in the nucleus. In terms of biological role, possible role in regulating endocytosis of the transferrin receptor at the plasma membrane. Alternatively, may function as a negative regulator of the amino acid-induced TOR signaling by inhibiting the formation of active Rag GTPase complexes. Preferentially binds inactive Rag GTPase complexes and prevents their interaction with the mTORC1 complex inhibiting its relocalization to lysosomes and its activation. Thereby, may indirectly regulate cell growth, proliferation and autophagy. This chain is SH3 domain-binding protein 4 (sh3bp4), found in Xenopus tropicalis (Western clawed frog).